Reading from the N-terminus, the 1029-residue chain is Probable E3 ubiquitin protein ligase C167.07c (1029 aa).

Positions 46–75 constitute an IQ domain; it reads AENNSVAVQSLSRGFLARRKFKQDFRERWI. An HECT domain is found at 692-1029; it reads FGKLLKGPIR…VRSGVGFGFS (338 aa). Cys997 serves as the catalytic Glycyl thioester intermediate.

It localises to the cytoplasm. The protein localises to the nucleus. The catalysed reaction is S-ubiquitinyl-[E2 ubiquitin-conjugating enzyme]-L-cysteine + [acceptor protein]-L-lysine = [E2 ubiquitin-conjugating enzyme]-L-cysteine + N(6)-ubiquitinyl-[acceptor protein]-L-lysine.. Probable E3 ubiquitin-protein ligase which mediates ubiquitination and subsequent proteasomal degradation of target proteins. This is Probable E3 ubiquitin protein ligase C167.07c from Schizosaccharomyces pombe (strain 972 / ATCC 24843) (Fission yeast).